The sequence spans 431 residues: Glutamate-1-semialdehyde 2,1-aminomutase (431 aa).

At lysine 269 the chain carries N6-(pyridoxal phosphate)lysine.

The protein belongs to the class-III pyridoxal-phosphate-dependent aminotransferase family. HemL subfamily. As to quaternary structure, homodimer. Pyridoxal 5'-phosphate serves as cofactor.

The protein localises to the cytoplasm. It carries out the reaction (S)-4-amino-5-oxopentanoate = 5-aminolevulinate. Its pathway is porphyrin-containing compound metabolism; protoporphyrin-IX biosynthesis; 5-aminolevulinate from L-glutamyl-tRNA(Glu): step 2/2. It functions in the pathway porphyrin-containing compound metabolism; chlorophyll biosynthesis. The protein is Glutamate-1-semialdehyde 2,1-aminomutase of Chlorobium limicola (strain DSM 245 / NBRC 103803 / 6330).